The following is a 159-amino-acid chain: Endoribonuclease YbeY (159 aa).

Residues histidine 120, histidine 124, and histidine 130 each coordinate Zn(2+).

It belongs to the endoribonuclease YbeY family. It depends on Zn(2+) as a cofactor.

Its subcellular location is the cytoplasm. Its function is as follows. Single strand-specific metallo-endoribonuclease involved in late-stage 70S ribosome quality control and in maturation of the 3' terminus of the 16S rRNA. This Parafrankia sp. (strain EAN1pec) protein is Endoribonuclease YbeY.